A 943-amino-acid polypeptide reads, in one-letter code: Mechanosensitive ion channel protein BA (943 aa).

The disordered stretch occupies residues 1–67 (MPNPNDVTID…PPSSSLGFGH (67 aa)). The Cytoplasmic segment spans residues 1-107 (MPNPNDVTID…AVLNFSTVTR (107 aa)). Polar residues predominate over residues 14-37 (TSVSSRGQTGARNNSTNIPNSPSG). A helical transmembrane segment spans residues 108–130 (YLIYIAPLAALLAIPIIVGATAA). Topologically, residues 131–149 (EDAKIGGVSLPWFFCWVEV) are lumenal. Residues 150-175 (VWVSLWVCKLVAKVIPFVFQFVCGIV) form a helical membrane-spanning segment. Residues 176–195 (SAGTRKYALILRNLEIPITM) lie on the Cytoplasmic side of the membrane. Residues 196-214 (VLWMIVSLVTFLPIMVYNP) form a helical membrane-spanning segment. The Lumenal segment spans residues 215–233 (RNKREGDTETKSWEKSVKN). The chain crosses the membrane as a helical span at residues 234-259 (VLFAFLVCALIFLGEKTLVQLISISY). Over 260–468 (HRKQFDARIK…DQAIHVLDNL (209 aa)) the chain is Cytoplasmic. The EF-hand domain maps to 412-447 (GKEAEAEECFTMLDRDGNGDISLDEIILAISEIGRT). D425, D427, N429, D431, and E436 together coordinate Ca(2+). Residues 469-489 (LATIAFIIAVLVFVSFVTSGF) form a helical membrane-spanning segment. At 490–502 (GTVIAAGATSLLS) the chain is on the lumenal side. Residues 503 to 523 (LSFVFATTAQEVLGSCIFLFV) form a helical membrane-spanning segment. Topologically, residues 524–943 (KHPFDIGDRV…QRRNYESRRL (420 aa)) are cytoplasmic. A disordered region spans residues 677-943 (PGAAAEDAAA…QRRNYESRRL (267 aa)). 2 stretches are compositionally biased toward low complexity: residues 678–687 (GAAAEDAAAA) and 744–759 (GASA…AGSA). A compositionally biased stretch (polar residues) spans 760-781 (YSETTLNNTVSEPYQRSFTPNT). A compositionally biased stretch (basic and acidic residues) spans 798–810 (TERHLGVSHDSIA). Positions 827–842 (TTANQSLASPTTMQSE) are enriched in polar residues. Positions 857–880 (PSSSQYSQQYPQQQSQSPYSYTYS) are enriched in low complexity. The segment covering 886 to 904 (PESSLQPLEHTTSYNQSLP) has biased composition (polar residues). A compositionally biased stretch (basic and acidic residues) spans 916 to 943 (NSLEGHSPHVDPRHMTEEQRRNYESRRL).

The protein belongs to the MscS (TC 1.A.23) family.

Its subcellular location is the cell membrane. The catalysed reaction is Ca(2+)(in) = Ca(2+)(out). Functionally, acts as a mechanosensitive calcium channel in response to membrane stretch. Regulates intracellular calcium levels and cell volume for survival in response to hypo-osmotic shock. Involved in maintaining vacuole integrity and protecting the nuclear envelope upon hypo-osmotic shock. seems to contribute to CaCl2 toxicityIn contracstz to mscA, mscB seems to contribute to CaCl(2) toxicity. In Emericella nidulans (strain FGSC A4 / ATCC 38163 / CBS 112.46 / NRRL 194 / M139) (Aspergillus nidulans), this protein is Mechanosensitive ion channel protein BA.